The chain runs to 192 residues: uncharacterized protein (192 aa).

The Nudix hydrolase domain occupies 29–160; it reads HRQAAVLIPI…PLDIYRRGDS (132 aa). Positions 67 to 89 match the Nudix box motif; that stretch reads GAVDDTDTSVIAAALREAEEEVA. Glu83 and Glu87 together coordinate Mg(2+).

Belongs to the Nudix hydrolase family. PCD1 subfamily. The cofactor is Mn(2+). It depends on Mg(2+) as a cofactor.

Probably mediates the hydrolysis of some nucleoside diphosphate derivatives. This is an uncharacterized protein from Escherichia coli O7:K1 (strain IAI39 / ExPEC).